We begin with the raw amino-acid sequence, 414 residues long: Gamma-glutamyl phosphate reductase (414 aa).

Belongs to the gamma-glutamyl phosphate reductase family.

It is found in the cytoplasm. It catalyses the reaction L-glutamate 5-semialdehyde + phosphate + NADP(+) = L-glutamyl 5-phosphate + NADPH + H(+). The protein operates within amino-acid biosynthesis; L-proline biosynthesis; L-glutamate 5-semialdehyde from L-glutamate: step 2/2. Catalyzes the NADPH-dependent reduction of L-glutamate 5-phosphate into L-glutamate 5-semialdehyde and phosphate. The product spontaneously undergoes cyclization to form 1-pyrroline-5-carboxylate. This chain is Gamma-glutamyl phosphate reductase, found in Francisella philomiragia subsp. philomiragia (strain ATCC 25017 / CCUG 19701 / FSC 153 / O#319-036).